We begin with the raw amino-acid sequence, 299 residues long: Coenzyme PQQ synthesis protein B (299 aa).

This sequence belongs to the PqqB family.

It functions in the pathway cofactor biosynthesis; pyrroloquinoline quinone biosynthesis. In terms of biological role, may be involved in the transport of PQQ or its precursor to the periplasm. The polypeptide is Coenzyme PQQ synthesis protein B (Methylorubrum extorquens (strain PA1) (Methylobacterium extorquens)).